Consider the following 161-residue polypeptide: Capsid protein (161 aa).

The residue at position 2 (Ala-2) is an N-acetylalanine; by host.

Belongs to the virgaviridae capsid protein family.

The protein localises to the virion. Its function is as follows. Capsid protein self-assembles to form rod-shaped virions about 18 nm in diameter with a central canal enclosing the viral genomic RNA. The polypeptide is Capsid protein (CP) (Cucumber green mottle mosaic virus (strain watermelon SH) (CGMMV)).